A 313-amino-acid chain; its full sequence is D-alanine--D-alanine ligase (313 aa).

The 201-residue stretch at 108–308 (KLVWQQTGVP…YSELVVKVLA (201 aa)) folds into the ATP-grasp domain. Position 138–193 (138–193 (VAKLGLPLFVKPASEGSSVAVLKVKTADALPAALSEAATHDKIVIVEKSIEGGGEY)) interacts with ATP. 3 residues coordinate Mg(2+): Asp-262, Glu-275, and Asn-277.

This sequence belongs to the D-alanine--D-alanine ligase family. Mg(2+) serves as cofactor. Requires Mn(2+) as cofactor.

The protein localises to the cytoplasm. It catalyses the reaction 2 D-alanine + ATP = D-alanyl-D-alanine + ADP + phosphate + H(+). Its pathway is cell wall biogenesis; peptidoglycan biosynthesis. Its function is as follows. Cell wall formation. The sequence is that of D-alanine--D-alanine ligase from Burkholderia ambifaria (strain ATCC BAA-244 / DSM 16087 / CCUG 44356 / LMG 19182 / AMMD) (Burkholderia cepacia (strain AMMD)).